The following is a 210-amino-acid chain: 3-oxo-tetronate 4-phosphate decarboxylase (210 aa).

The active-site Proton acceptor is Glu74. Glu74, His93, and His95 together coordinate Zn(2+). Tyr120 functions as the Proton donor in the catalytic mechanism. Zn(2+) is bound at residue His160.

The protein belongs to the aldolase class II family. AraD/FucA subfamily. Zn(2+) is required as a cofactor.

The catalysed reaction is 3-dehydro-4-O-phospho-D-erythronate + H(+) = dihydroxyacetone phosphate + CO2. The enzyme catalyses 3-dehydro-4-O-phospho-L-erythronate + H(+) = dihydroxyacetone phosphate + CO2. Its function is as follows. Catalyzes the decarboxylation of 3-oxo-tetronate 4-phosphate to dihydroxyacetone phosphate (DHAP) and CO(2). This is 3-oxo-tetronate 4-phosphate decarboxylase from Haemophilus influenzae (strain ATCC 51907 / DSM 11121 / KW20 / Rd).